The sequence spans 269 residues: Enoyl-[acyl-carrier-protein] reductase [NADH] (269 aa).

NAD(+) is bound by residues 20 to 21 (SI), 64 to 65 (DV), and 95 to 96 (IG). Residue Tyr158 coordinates substrate. Residues Lys165 and Ile194 each coordinate NAD(+). At Thr266 the chain carries Phosphothreonine.

It belongs to the short-chain dehydrogenases/reductases (SDR) family. FabI subfamily. In terms of assembly, homodimer. Homotetramer. In terms of processing, is phosphorylated in vivo. Phosphorylation on Thr-266 decreases enzymatic activity.

It is found in the secreted. The protein resides in the cell wall. It catalyses the reaction a 2,3-saturated acyl-[ACP] + NAD(+) = a (2E)-enoyl-[ACP] + NADH + H(+). The catalysed reaction is a 2,3-saturated acyl-CoA + NAD(+) = a (2E)-enoyl-CoA + NADH + H(+). It carries out the reaction (2E)-octenoyl-CoA + NADH + H(+) = octanoyl-CoA + NAD(+). The enzyme catalyses (2E)-dodecenoyl-CoA + NADH + H(+) = dodecanoyl-CoA + NAD(+). It functions in the pathway lipid metabolism; mycolic acid biosynthesis. With respect to regulation, inhA activity is controlled via phosphorylation: phosphorylation on Thr-266 decreases InhA activity and likely negatively regulates biosynthesis of mycolic acids and growth of the bacterium. InhA activity is likely inhibited by activated isoniazid, hexadecynoyl-CoA and octadecynoyl-CoA, which also block the biosynthesis of mycolic acids. The antitubercular pro-drug isoniazid (INH) is oxidatively activated by the catalase-peroxidase KatG and then covalently binds NAD to form an adduct that inhibits the activity of InhA. The inhibitory adduct is the isonicotinic-acyl-NADH where the isonicotinic-acyl group replaces the 4S (and not the 4R) hydrogen of NADH. Similarly, the antitubercular pro-drugs ethionamide (ETH) and prothionamide (PTH) are activated by the flavoprotein monooxygenase EthA, and forms an adduct with NAD (ETH-NAD and PTH-NAD, respectively) that is a tight-binding inhibitor of InhA. Enoyl-ACP reductase of the type II fatty acid syntase (FAS-II) system, which is involved in the biosynthesis of mycolic acids, a major component of mycobacterial cell walls. Catalyzes the NADH-dependent reduction of the double bond of 2-trans-enoyl-[acyl-carrier protein], an essential step in the fatty acid elongation cycle of the FAS-II pathway. Shows preference for long-chain fatty acyl thioester substrates (&gt;C16), and can also use 2-trans-enoyl-CoAs as alternative substrates. The mycobacterial FAS-II system utilizes the products of the FAS-I system as primers to extend fatty acyl chain lengths up to C56, forming the meromycolate chain that serves as the precursor for final mycolic acids. Its function is as follows. Is the primary target of the first-line antitubercular drug isoniazid (INH) and of the second-line drug ethionamide (ETH). Overexpressed inhA confers INH and ETH resistance to M.smegmatis. The mechanism of isoniazid action against InhA is covalent attachment of the activated form of the drug to the nicotinamide ring of NAD and binding of the INH-NAD adduct to the active site of InhA. Similarly, the ETH-NAD adduct binds InhA. This is Enoyl-[acyl-carrier-protein] reductase [NADH] from Mycolicibacterium smegmatis (strain ATCC 700084 / mc(2)155) (Mycobacterium smegmatis).